Here is a 443-residue protein sequence, read N- to C-terminus: ATP-dependent protease ATPase subunit HslU (443 aa).

Residues isoleucine 18, glycine 60–glutamate 65, aspartate 256, glutamate 321, and arginine 393 each bind ATP.

It belongs to the ClpX chaperone family. HslU subfamily. As to quaternary structure, a double ring-shaped homohexamer of HslV is capped on each side by a ring-shaped HslU homohexamer. The assembly of the HslU/HslV complex is dependent on binding of ATP.

The protein localises to the cytoplasm. In terms of biological role, ATPase subunit of a proteasome-like degradation complex; this subunit has chaperone activity. The binding of ATP and its subsequent hydrolysis by HslU are essential for unfolding of protein substrates subsequently hydrolyzed by HslV. HslU recognizes the N-terminal part of its protein substrates and unfolds these before they are guided to HslV for hydrolysis. In Pasteurella multocida (strain Pm70), this protein is ATP-dependent protease ATPase subunit HslU.